A 362-amino-acid chain; its full sequence is Probable dual-specificity RNA methyltransferase RlmN (362 aa).

Catalysis depends on glutamate 99, which acts as the Proton acceptor. A Radical SAM core domain is found at 105–341 (SPDRHTVCVS…VTVRKSQGAS (237 aa)). Cysteine 112 and cysteine 346 are joined by a disulfide. [4Fe-4S] cluster contacts are provided by cysteine 119, cysteine 123, and cysteine 126. S-adenosyl-L-methionine-binding positions include 171–172 (GE), serine 204, 227–229 (SLH), and asparagine 303. Cysteine 346 (S-methylcysteine intermediate) is an active-site residue.

Belongs to the radical SAM superfamily. RlmN family. Requires [4Fe-4S] cluster as cofactor.

It is found in the cytoplasm. The catalysed reaction is adenosine(2503) in 23S rRNA + 2 reduced [2Fe-2S]-[ferredoxin] + 2 S-adenosyl-L-methionine = 2-methyladenosine(2503) in 23S rRNA + 5'-deoxyadenosine + L-methionine + 2 oxidized [2Fe-2S]-[ferredoxin] + S-adenosyl-L-homocysteine. It catalyses the reaction adenosine(37) in tRNA + 2 reduced [2Fe-2S]-[ferredoxin] + 2 S-adenosyl-L-methionine = 2-methyladenosine(37) in tRNA + 5'-deoxyadenosine + L-methionine + 2 oxidized [2Fe-2S]-[ferredoxin] + S-adenosyl-L-homocysteine. Its function is as follows. Specifically methylates position 2 of adenine 2503 in 23S rRNA and position 2 of adenine 37 in tRNAs. The polypeptide is Probable dual-specificity RNA methyltransferase RlmN (Chlorobium phaeobacteroides (strain BS1)).